A 100-amino-acid polypeptide reads, in one-letter code: Small ribosomal subunit protein bS6 (100 aa).

This sequence belongs to the bacterial ribosomal protein bS6 family.

Binds together with bS18 to 16S ribosomal RNA. The polypeptide is Small ribosomal subunit protein bS6 (Tropheryma whipplei (strain TW08/27) (Whipple's bacillus)).